The following is a 197-amino-acid chain: Ribonuclease HII (197 aa).

The region spanning 7-197 is the RNase H type-2 domain; sequence LGIAGVDEVG…SFLRKLFATV (191 aa). Positions 13, 14, and 109 each coordinate a divalent metal cation.

The protein belongs to the RNase HII family. The cofactor is Mn(2+). It depends on Mg(2+) as a cofactor.

It is found in the cytoplasm. The catalysed reaction is Endonucleolytic cleavage to 5'-phosphomonoester.. In terms of biological role, endonuclease that specifically degrades the RNA of RNA-DNA hybrids. In Synechococcus sp. (strain CC9311), this protein is Ribonuclease HII.